Consider the following 89-residue polypeptide: Small ribosomal subunit protein uS15 (89 aa).

It belongs to the universal ribosomal protein uS15 family. In terms of assembly, part of the 30S ribosomal subunit. Forms a bridge to the 50S subunit in the 70S ribosome, contacting the 23S rRNA.

One of the primary rRNA binding proteins, it binds directly to 16S rRNA where it helps nucleate assembly of the platform of the 30S subunit by binding and bridging several RNA helices of the 16S rRNA. Functionally, forms an intersubunit bridge (bridge B4) with the 23S rRNA of the 50S subunit in the ribosome. The protein is Small ribosomal subunit protein uS15 of Shewanella halifaxensis (strain HAW-EB4).